A 556-amino-acid chain; its full sequence is Phenylalanine--tRNA ligase beta subunit (556 aa).

The 76-residue stretch at 278-353 (LTPKRFEVEL…IAYGYNNIEP (76 aa)) folds into the B5 domain. Residues aspartate 331, aspartate 337, glutamate 340, and aspartate 341 each coordinate Mg(2+).

The protein belongs to the phenylalanyl-tRNA synthetase beta subunit family. Type 2 subfamily. In terms of assembly, tetramer of two alpha and two beta subunits. Mg(2+) is required as a cofactor.

The protein localises to the cytoplasm. The enzyme catalyses tRNA(Phe) + L-phenylalanine + ATP = L-phenylalanyl-tRNA(Phe) + AMP + diphosphate + H(+). The polypeptide is Phenylalanine--tRNA ligase beta subunit (Pyrococcus abyssi (strain GE5 / Orsay)).